The following is a 481-amino-acid chain: Protein FAM83E (481 aa).

The DUF1669 stretch occupies residues 1-296; it reads MAASQLAALE…LYAASRPLSA (296 aa). Residues 351–481 are disordered; that stretch reads KQETPTTTGP…ASGSGSGRRR (131 aa). The segment covering 371–385 has biased composition (low complexity); it reads RTRTTSGPPTRPSRS. Composition is skewed to polar residues over residues 391 to 400 and 465 to 474; these read RLSQLSGSSD and NATTSDWASG.

It belongs to the FAM83 family. In terms of assembly, directly interacts (via DUF1669) with CSNK1A1, CSNK1A1L, CSNK1D and CSNK1E. May interact with RAF1.

Its subcellular location is the cytoplasm. It localises to the perinuclear region. In terms of biological role, may play a role in MAPK signaling. The polypeptide is Protein FAM83E (Mus musculus (Mouse)).